Reading from the N-terminus, the 260-residue chain is Trialysin (260 aa).

An N-terminal signal peptide occupies residues 1–19 (MSKFWLLLLLVAAFQFAHS). A propeptide spans 20 to 55 (YPAAEYELDETTNDEVRQFIGDGYFEDEGDDGDEER) (removed in mature form, probably by the serine protease triapsin).

Belongs to the redulysin-like family. In terms of tissue distribution, expressed in salivary glands.

It localises to the secreted. It is found in the target cell membrane. In terms of biological role, pore-forming protein that induces lysis of T.cruzi trypomastigotes, bacteria E.coli and human red blood cells. The parasite lysis is much more important than the hemolysis, probably due to difference in membrane composition. Its action on protozoan parasites and bacteria may indicate a role in the control of microorganism growth in the salivary glands. This chain is Trialysin, found in Triatoma infestans (Assassin bug).